The following is a 332-amino-acid chain: Phosphate acyltransferase (332 aa).

It belongs to the PlsX family. Homodimer. Probably interacts with PlsY.

The protein resides in the cytoplasm. It catalyses the reaction a fatty acyl-[ACP] + phosphate = an acyl phosphate + holo-[ACP]. Its pathway is lipid metabolism; phospholipid metabolism. Functionally, catalyzes the reversible formation of acyl-phosphate (acyl-PO(4)) from acyl-[acyl-carrier-protein] (acyl-ACP). This enzyme utilizes acyl-ACP as fatty acyl donor, but not acyl-CoA. This is Phosphate acyltransferase from Caldanaerobacter subterraneus subsp. tengcongensis (strain DSM 15242 / JCM 11007 / NBRC 100824 / MB4) (Thermoanaerobacter tengcongensis).